The sequence spans 83 residues: Small ribosomal subunit protein bS18 (83 aa).

A disordered region spans residues 1 to 23; the sequence is MKQRNNAKRVRLEQTRRPKKNPL.

It belongs to the bacterial ribosomal protein bS18 family. In terms of assembly, part of the 30S ribosomal subunit. Forms a tight heterodimer with protein bS6.

In terms of biological role, binds as a heterodimer with protein bS6 to the central domain of the 16S rRNA, where it helps stabilize the platform of the 30S subunit. The chain is Small ribosomal subunit protein bS18 from Corynebacterium efficiens (strain DSM 44549 / YS-314 / AJ 12310 / JCM 11189 / NBRC 100395).